Consider the following 411-residue polypeptide: Putative ion-transport protein YfeO (411 aa).

A run of 11 helical transmembrane segments spans residues 9-29 (MLLLSLPALIIGVASSLVLIA), 54-74 (DSPFWIVGMLTLTGVVVGLII), 99-119 (ALPGLLLALIIGLAGGVSLGP), 149-169 (ILASAGTIGALFGTPVAAALI), 186-206 (LFAPLMAAAAGSLTTSLFFHP), 223-243 (IASGAIVAAIAIAAGMVAVWC), 258-278 (VLILGIGGFILGILGVIGGPL), 296-316 (LGAGDYFTLAVVKLAALVIAA), 322-342 (GGRIFPAVFIGAALGLMLHAH), 343-363 (VEAVPAAITVSCAILGLVLVV), and 386-406 (LLCIVMLPAWLLLAGKPLLAA).

This sequence belongs to the chloride channel (TC 2.A.49) family.

The protein resides in the cell membrane. This is Putative ion-transport protein YfeO from Salmonella choleraesuis (strain SC-B67).